The following is a 129-amino-acid chain: CD59B glycoprotein (129 aa).

Positions 1-23 (MRAQRGLILLLLLLAVFCSTAVS) are cleaved as a signal peptide. The UPAR/Ly6 domain maps to 24–107 (LKCYNCLDPV…GLEEPNNAET (84 aa)). 5 disulfide bridges follow: Cys26–Cys49, Cys29–Cys36, Cys42–Cys62, Cys68–Cys86, and Cys87–Cys92. The N-linked (GlcNAc...) asparagine glycan is linked to Asn39. Asn104 carries GPI-anchor amidated asparagine lipidation. Positions 105–129 (AETSSLRKTALLGTSVLVAILKFCF) are cleaved as a propeptide — removed in mature form.

Interacts with T-cell surface antigen CD2. In terms of processing, N- and O-glycosylated. As to expression, widely expressed in the kidneys, brain, lungs, spleen and testis Testis-specific.

It localises to the cell membrane. Its subcellular location is the secreted. Potent inhibitor of the complement membrane attack complex (MAC) action, which protects self-cells from damage during complement activation. Acts by binding to the beta-haipins of C8 (C8A and C8B) components of the assembling MAC, forming an intermolecular beta-sheet that prevents incorporation of the multiple copies of C9 required for complete formation of the osmolytic pore. The chain is CD59B glycoprotein from Mus musculus (Mouse).